The primary structure comprises 424 residues: Testican-2 (424 aa).

An N-terminal signal peptide occupies residues methionine 1–alanine 22. A Phosphoserine; by FAM20C modification is found at serine 72. Disulfide bonds link cysteine 90/cysteine 101, cysteine 95/cysteine 111, cysteine 136/cysteine 166, cysteine 139/cysteine 159, and cysteine 148/cysteine 180. Positions glycine 130–cysteine 182 constitute a Kazal-like domain. N-linked (GlcNAc...) asparagine glycosylation is present at asparagine 225. One can recognise a Thyroglobulin type-1 domain in the interval lysine 310–cysteine 376. Cystine bridges form between cysteine 313–cysteine 337, cysteine 348–cysteine 355, and cysteine 357–cysteine 376. Serine 383 and serine 388 each carry an O-linked (Xyl...) (glycosaminoglycan) serine glycan. The segment at glycine 387–tryptophan 424 is disordered. A compositionally biased stretch (acidic residues) spans tryptophan 392 to tryptophan 424.

Contains chondroitin sulfate and heparan sulfate O-linked oligosaccharides. Highly expressed in brain. Also found in lung and testis.

It localises to the secreted. The protein resides in the extracellular space. The protein localises to the extracellular matrix. Functionally, may participate in diverse steps of neurogenesis. Binds calcium. This Homo sapiens (Human) protein is Testican-2 (SPOCK2).